The following is a 988-amino-acid chain: Bifunctional glutamine synthetase adenylyltransferase/adenylyl-removing enzyme (988 aa).

The adenylyl removase stretch occupies residues 1–472; it reads MTKRETVERR…RYSALFEQET (472 aa). The tract at residues 476 to 988 is adenylyl transferase; it reads GEAGNLVFTG…AFVAVVKNGG (513 aa).

The protein belongs to the GlnE family. Mg(2+) serves as cofactor.

The catalysed reaction is [glutamine synthetase]-O(4)-(5'-adenylyl)-L-tyrosine + phosphate = [glutamine synthetase]-L-tyrosine + ADP. The enzyme catalyses [glutamine synthetase]-L-tyrosine + ATP = [glutamine synthetase]-O(4)-(5'-adenylyl)-L-tyrosine + diphosphate. Its function is as follows. Involved in the regulation of glutamine synthetase GlnA, a key enzyme in the process to assimilate ammonia. When cellular nitrogen levels are high, the C-terminal adenylyl transferase (AT) inactivates GlnA by covalent transfer of an adenylyl group from ATP to specific tyrosine residue of GlnA, thus reducing its activity. Conversely, when nitrogen levels are low, the N-terminal adenylyl removase (AR) activates GlnA by removing the adenylyl group by phosphorolysis, increasing its activity. The regulatory region of GlnE binds the signal transduction protein PII (GlnB) which indicates the nitrogen status of the cell. The sequence is that of Bifunctional glutamine synthetase adenylyltransferase/adenylyl-removing enzyme from Agrobacterium fabrum (strain C58 / ATCC 33970) (Agrobacterium tumefaciens (strain C58)).